We begin with the raw amino-acid sequence, 382 residues long: Cell division protein FtsZ (382 aa).

Residues 21–25 (GGGSN), 108–110 (GTG), Glu139, Arg143, and Asp187 contribute to the GTP site. The segment at 322 to 382 (RAQQQSNFNR…FLRNRRRKSR (61 aa)) is disordered. The segment covering 340–352 (KSKEKEAEKKEPR) has biased composition (basic and acidic residues).

The protein belongs to the FtsZ family. In terms of assembly, homodimer. Polymerizes to form a dynamic ring structure in a strictly GTP-dependent manner. Interacts directly with several other division proteins.

It localises to the cytoplasm. Its function is as follows. Essential cell division protein that forms a contractile ring structure (Z ring) at the future cell division site. The regulation of the ring assembly controls the timing and the location of cell division. One of the functions of the FtsZ ring is to recruit other cell division proteins to the septum to produce a new cell wall between the dividing cells. Binds GTP and shows GTPase activity. The protein is Cell division protein FtsZ of Halalkalibacterium halodurans (strain ATCC BAA-125 / DSM 18197 / FERM 7344 / JCM 9153 / C-125) (Bacillus halodurans).